Consider the following 256-residue polypeptide: Ribonuclease HII (256 aa).

Residues 72–256 (QYVAGIDEVG…TFRPVPDYVN (185 aa)) enclose the RNase H type-2 domain. D78, E79, and D170 together coordinate a divalent metal cation.

The protein belongs to the RNase HII family. Requires Mn(2+) as cofactor. It depends on Mg(2+) as a cofactor.

The protein localises to the cytoplasm. The catalysed reaction is Endonucleolytic cleavage to 5'-phosphomonoester.. Its function is as follows. Endonuclease that specifically degrades the RNA of RNA-DNA hybrids. This Limosilactobacillus fermentum (strain NBRC 3956 / LMG 18251) (Lactobacillus fermentum) protein is Ribonuclease HII.